Consider the following 35-residue polypeptide: Apolipophorin-3 (35 aa).

Equilibrium between a soluble monomer and a bound lipoprotein form. Apolipophorin-3 associates with lipophorin during lipid loading until each particle contains 9 or 14 molecules of apolipophorin-3. In terms of tissue distribution, hemolymph.

The protein localises to the secreted. Assists in the loading of diacylglycerol, generated from triacylglycerol stores in the fat body through the action of adipokinetic hormone, into lipophorin, the hemolymph lipoprotein. It increases the lipid carrying capacity of lipophorin by covering the expanding hydrophobic surface resulting from diacylglycerol uptake. It thus plays a critical role in the transport of lipids during flight in several species of insects. Has hemagglutinating activity towards rabbit erythrocytes. The polypeptide is Apolipophorin-3 (Heliothis virescens (Tobacco budworm moth)).